A 303-amino-acid polypeptide reads, in one-letter code: 1D-myo-inositol 2-acetamido-2-deoxy-alpha-D-glucopyranoside deacetylase (303 aa).

Zn(2+) contacts are provided by His-15, Asp-18, and His-157.

The protein belongs to the MshB deacetylase family. Requires Zn(2+) as cofactor.

The catalysed reaction is 1D-myo-inositol 2-acetamido-2-deoxy-alpha-D-glucopyranoside + H2O = 1D-myo-inositol 2-amino-2-deoxy-alpha-D-glucopyranoside + acetate. Its function is as follows. Catalyzes the deacetylation of 1D-myo-inositol 2-acetamido-2-deoxy-alpha-D-glucopyranoside (GlcNAc-Ins) in the mycothiol biosynthesis pathway. This Kribbella flavida (strain DSM 17836 / JCM 10339 / NBRC 14399) protein is 1D-myo-inositol 2-acetamido-2-deoxy-alpha-D-glucopyranoside deacetylase.